The sequence spans 277 residues: MDTQPIVLVITDSVTLHAAIVSWGLQNFQVKAEDLHVITQADRLEGKLNLKSSSLDAVVSISALHTQQWLLELARVLRPGGIIVLQNPNSVNDDVKETLSALERILLLAGFVLSEGADGSIDGLGPLAVKGRKPAWDTGSSFKLKKKVAQKPANVVTFDIPAFKVQLGDDLDDLIDEDSLLTEEDLKKPDLPPVDDCEVGKAGRKACKNCTCGRVEMEEKQEKLGLPSDLLDNPQSSCGSCGLGDAFRCSTCPYKGLPPFKLGEKISLSQSFLTADI.

Residues 1-141 form an N-terminal SAM-like domain region; the sequence is MDTQPIVLVI…RKPAWDTGSS (141 aa). Residues 141–186 are linker; the sequence is SFKLKKKVAQKPANVVTFDIPAFKVQLGDDLDDLIDEDSLLTEEDL. Cysteine 197, cysteine 207, cysteine 210, and cysteine 212 together coordinate [2Fe-2S] cluster. Residues 197–212 are fe-S binding site A; it reads CEVGKAGRKACKNCTC. Residues cysteine 238, cysteine 241, cysteine 249, and cysteine 252 each contribute to the [4Fe-4S] cluster site. 2 short sequence motifs (cx2C motif) span residues 238 to 241 and 249 to 252; these read CGSC and CSTC. The tract at residues 238–252 is fe-S binding site B; sequence CGSCGLGDAFRCSTC.

It belongs to the anamorsin family. Monomer. [2Fe-2S] cluster is required as a cofactor. Requires [4Fe-4S] cluster as cofactor.

The protein localises to the cytoplasm. It localises to the mitochondrion intermembrane space. Functionally, component of the cytosolic iron-sulfur (Fe-S) protein assembly (CIA) machinery. Required for the maturation of extramitochondrial Fe-S proteins. Part of an electron transfer chain functioning in an early step of cytosolic Fe-S biogenesis, facilitating the de novo assembly of a [4Fe-4S] cluster on the cytosolic Fe-S scaffold complex. Electrons are transferred from NADPH via a FAD- and FMN-containing diflavin oxidoreductase. Together with the diflavin oxidoreductase, also required for the assembly of the diferric tyrosyl radical cofactor of ribonucleotide reductase (RNR), probably by providing electrons for reduction during radical cofactor maturation in the catalytic small subunit. In Picea sitchensis (Sitka spruce), this protein is Anamorsin homolog 2.